The chain runs to 59 residues: UPF0434 protein Sputw3181_2540 (59 aa).

Belongs to the UPF0434 family.

The chain is UPF0434 protein Sputw3181_2540 from Shewanella sp. (strain W3-18-1).